The sequence spans 242 residues: 1-(5-phosphoribosyl)-5-[(5-phosphoribosylamino)methylideneamino] imidazole-4-carboxamide isomerase (242 aa).

Asp-10 acts as the Proton acceptor in catalysis. Residue Asp-132 is the Proton donor of the active site.

Belongs to the HisA/HisF family.

Its subcellular location is the cytoplasm. The catalysed reaction is 1-(5-phospho-beta-D-ribosyl)-5-[(5-phospho-beta-D-ribosylamino)methylideneamino]imidazole-4-carboxamide = 5-[(5-phospho-1-deoxy-D-ribulos-1-ylimino)methylamino]-1-(5-phospho-beta-D-ribosyl)imidazole-4-carboxamide. The protein operates within amino-acid biosynthesis; L-histidine biosynthesis; L-histidine from 5-phospho-alpha-D-ribose 1-diphosphate: step 4/9. This chain is 1-(5-phosphoribosyl)-5-[(5-phosphoribosylamino)methylideneamino] imidazole-4-carboxamide isomerase, found in Methanothrix thermoacetophila (strain DSM 6194 / JCM 14653 / NBRC 101360 / PT) (Methanosaeta thermophila).